A 180-amino-acid polypeptide reads, in one-letter code: uncharacterized protein (180 aa).

The protein belongs to the CdaR family.

This is an uncharacterized protein from Thermomonospora curvata.